The chain runs to 95 residues: RING finger protein Z (95 aa).

Residues 1 to 16 (MGNSKSKSNPSSSSES) show a composition bias toward low complexity. The interval 1-23 (MGNSKSKSNPSSSSESQKGAPTV) is disordered. G2 is lipidated: N-myristoyl glycine; by host. An RING-type; atypical zinc finger spans residues 40-76 (CKCCWFADKNLIKCSDHYLCLRCLNVMLKNSDLCNIC). The PTAP/PSAP motif motif lies at 90-93 (PSAP).

Belongs to the arenaviridae Z protein family. As to quaternary structure, interacts with protein NP; this interaction probably directs the encapsidated genome to budding sites. Interacts (via RING domain) with polymerase L; this interaction inhibits viral transcription and replication, Z partially blocks the product exit tunnel for the releasing nascent RNA product. Interacts with the glycoprotein complex; this interaction plays a role in virion budding. Interacts with host eIF4E; this interaction results in eIF4E reduced affinity for its substrate, the 5'-m7 G cap structure. Interacts (via late-budding domain) with host TSG101; this interaction is essential for budding and release of viral particles. Interacts with host RPLP0; this interaction may serve to load ribosome-like particles inside the virion. Interacts with host PML; this interaction induces PML bodies redistribution in the cytoplasm upon viral infection. Post-translationally, myristoylation is required for the role of RING finger protein Z in assembly and budding.

The protein resides in the virion. It is found in the host cytoplasm. It localises to the host perinuclear region. The protein localises to the host cell membrane. Plays a crucial role in virion assembly and budding. Expressed late in the virus life cycle, it acts as an inhibitor of viral transcription and RNA synthesis by interacting with the viral polymerase L. Presumably recruits the NP encapsidated genome to cellular membranes at budding sites via direct interaction with NP. Plays critical roles in the final steps of viral release by interacting with host TSG101, a member of the vacuolar protein-sorting pathway and using other cellular host proteins involved in vesicle formation pathway. The budding of the virus progeny occurs after association of protein Z with the viral glycoprotein complex SSP-GP1-GP2 at the cell periphery, step that requires myristoylation of protein Z. Also selectively represses protein production by associating with host eIF4E. In cell-based minigenome assay, has an inhibitory effect on the ribonucleoprotein machinery (vRNP), which is responsible for the replication and transcription of the viral genome. The protein is RING finger protein Z of Guanarito mammarenavirus (isolate Human/Venezuela/NH-95551/1990) (GTOV).